A 798-amino-acid polypeptide reads, in one-letter code: Integrin beta-1-B (798 aa).

The N-terminal stretch at Met1–Ala21 is a signal peptide. Residues Gln22–Pro727 are Extracellular-facing. Residues Glu27–Pro77 enclose the PSI domain. Cystine bridges form between Cys28/Cys46, Cys36/Cys464, Cys39/Cys65, Cys49/Cys76, Cys206/Cys212, Cys260/Cys300, Cys400/Cys414, Cys434/Cys462, Cys466/Cys486, Cys477/Cys489, Cys491/Cys500, Cys502/Cys533, Cys516/Cys531, Cys525/Cys536, Cys538/Cys553, Cys555/Cys576, Cys560/Cys574, Cys568/Cys579, Cys581/Cys590, Cys592/Cys615, Cys599/Cys613, Cys607/Cys618, Cys620/Cys630, Cys633/Cys636, Cys640/Cys691, Cys646/Cys665, Cys649/Cys661, and Cys699/Cys723. The interval Pro77 to Asp106 is disordered. N-linked (GlcNAc...) asparagine glycans are attached at residues Asn109 and Asn131. One can recognise a VWFA domain in the interval Asp139–Leu377. Mg(2+) is bound by residues Ser151 and Ser153. Ca(2+)-binding residues include Ser153, Asp156, Asp157, and Glu188. 2 N-linked (GlcNAc...) asparagine glycosylation sites follow: Asn211 and Asn223. Ca(2+) contacts are provided by Asn243, Asp245, Pro247, and Glu248. Residue Glu248 coordinates Mg(2+). Asn268 and Asn362 each carry an N-linked (GlcNAc...) asparagine glycan. The N-linked (GlcNAc...) asparagine glycan is linked to Asn416. I-EGF domains follow at residues Cys466–Glu501, Cys502–Glu554, Cys555–Asp591, and Cys592–Glu631. Residue Asn481 is glycosylated (N-linked (GlcNAc...) asparagine). Asn520 is a glycosylation site (N-linked (GlcNAc...) asparagine). N-linked (GlcNAc...) asparagine glycosylation occurs at Asn584. The N-linked (GlcNAc...) asparagine glycan is linked to Asn669. The chain crosses the membrane as a helical span at residues Asp728–Trp751. At Lys752 to Lys798 the chain is on the cytoplasmic side. At Tyr783 the chain carries Phosphotyrosine.

It belongs to the integrin beta chain family. In terms of assembly, heterodimer of an alpha and a beta subunit.

Its subcellular location is the cell membrane. It localises to the cell projection. The protein resides in the invadopodium membrane. It is found in the ruffle membrane. The protein localises to the melanosome. Its subcellular location is the cleavage furrow. It localises to the lamellipodium. The protein resides in the ruffle. In terms of biological role, beta integrins associate with alpha subunits to form receptor complexes that recognize the sequence R-G-D in a wide array of ligands. May be involved in osteoblast compaction. May play role in myoblast differentiation and fusion during skeletal myogenesis. The chain is Integrin beta-1-B (itgb1-b) from Xenopus laevis (African clawed frog).